The chain runs to 590 residues: Protein NRT1/ PTR FAMILY 8.5 (590 aa).

The helical transmembrane segment at 96-116 (ASDVMIWQGTCYITPLIGAVI) threads the bilayer. Thr126 carries the phosphothreonine modification. Transmembrane regions (helical) follow at residues 130 to 150 (FSAIYFIGMALLTLSASLPVL), 168 to 188 (TVQYAVFFTGLYLIALGTGGI), 214 to 234 (FFNWFYFSINIGSFISSTLLV), 242 to 262 (WGLGFLIPTVFMGVSIASFFI), 365 to 385 (FPIWASGIVYSVLYSQISTLF), 401 to 421 (IPPASFGVFDTLIVLISIPIY), 445 to 465 (MGIGLFLSVLSIAAAAIVETV), 478 to 498 (IFWQIPQYILMGIAEVFFFIG), 524 to 544 (AVGSYLSSLILTLVAYFTALG), and 562 to 582 (FFWLLVSLGLVNIPVYALICV).

The protein belongs to the major facilitator superfamily. Proton-dependent oligopeptide transporter (POT/PTR) (TC 2.A.17) family. Expressed in shoots, roots, stems, leaves, flowers and siliques.

The protein localises to the membrane. In Arabidopsis thaliana (Mouse-ear cress), this protein is Protein NRT1/ PTR FAMILY 8.5 (NPF8.5).